An 877-amino-acid polypeptide reads, in one-letter code: Hopanoid transporter HpnN (877 aa).

Topologically, residues 1-16 (MVTSLIVRLVAWSVRR) are cytoplasmic. A helical transmembrane segment spans residues 17-37 (PVWVVVLSLLIAAFSGVYVAR). Topologically, residues 38 to 279 (HFKINTDISK…FSSVEDGAAL (242 aa)) are periplasmic. The chain crosses the membrane as a helical span at residues 280 to 295 (NGVVTLLVVFVILWLA). Topologically, residues 296–299 (LRSK) are cytoplasmic. Residues 300-323 (RMIASVLVTLFVGLVVTAALGLAM) form a helical membrane-spanning segment. An SSD domain is found at 302–428 (IASVLVTLFV…LTLLPALLRL (127 aa)). At 324–332 (VGSLNMISV) the chain is on the periplasmic side. A helical membrane pass occupies residues 333 to 351 (AFMVLFVGLGVDFSIQYGV). The Cytoplasmic portion of the chain corresponds to 352-373 (KYREERFRDERIDHALIGAAHS). Residues 374 to 394 (MGMPLALATTAVAASFFSFIP) form a helical membrane-spanning segment. Residues 395-399 (TAYRG) are Periplasmic-facing. A helical transmembrane segment spans residues 400 to 426 (VSELGLIAGVGMFVALLTTLTLLPALL). At 427 to 452 (RLFAPPGESKTPGFPWLAPVDDYLDR) the chain is on the cytoplasmic side. The helical transmembrane segment at 453–472 (HRKPILIGTLAVVIGALPLL) threads the bilayer. Residues 473–718 (AFLHFDFNPL…ILHSANTIIS (246 aa)) lie on the Periplasmic side of the membrane. The chain crosses the membrane as a helical span at residues 719–739 (AFLHAALWSIISITILLWITL). Over 740–743 (RRFG) the chain is Cytoplasmic. Residues 744 to 766 (DVLRTLVPLLVSGIVTLEMCVVL) form a helical membrane-spanning segment. At 767–774 (GMSLNFAN) the chain is on the periplasmic side. The chain crosses the membrane as a helical span at residues 775-794 (IIALPLMLGVGVAFKVYFVM). The Cytoplasmic segment spans residues 795-809 (AWRAGQTGLLHSSLT). Residues 810–827 (HAVLFSAATTATAFGSLW) traverse the membrane as a helical segment. The Periplasmic segment spans residues 828–836 (LSHHPGTSS). Residues 837–858 (MGKLLALALTCTLIGAVVFQPV) traverse the membrane as a helical segment. Residues 859–877 (LMGKPRVKRAKNQSQGINE) are Cytoplasmic-facing.

It belongs to the resistance-nodulation-cell division (RND) (TC 2.A.6) family. MmpL subfamily. In terms of assembly, homodimer.

The protein resides in the cell inner membrane. In terms of biological role, essential for hopanoid transport from the cytoplasmic to the outer membrane. Is capable of shuttling hopanoid lipids from the inner membrane to the periplasm, where they probably spontaneously insert to the inner leaflet of the outer membrane, strengthening the cell envelope. May be a proton-motive-force (PMF)-dependent transporter. Is critical for multidrug resistance and cell wall remodeling in Burkholderia. The polypeptide is Hopanoid transporter HpnN (Burkholderia multivorans (strain ATCC 17616 / 249)).